Here is a 310-residue protein sequence, read N- to C-terminus: Homocysteine S-methyltransferase (310 aa).

Residues 1-310 form the Hcy-binding domain; the sequence is MSQNNPLRAL…ADIAALKARS (310 aa). Residues cysteine 229, cysteine 295, and cysteine 296 each contribute to the Zn(2+) site.

Monomer. The cofactor is Zn(2+).

It carries out the reaction S-methyl-L-methionine + L-homocysteine = 2 L-methionine + H(+). Catalyzes methyl transfer from S-methylmethionine or S-adenosylmethionine (less efficient) to homocysteine, selenohomocysteine and less efficiently selenocysteine. This Escherichia coli (strain K12) protein is Homocysteine S-methyltransferase (mmuM).